The primary structure comprises 509 residues: Meiotic fizzy-related protein 2 (509 aa).

WD repeat units lie at residues 159-196, 199-238, 242-281, 287-326, 329-371, and 437-477; these read LDDFYISPLAWSTNGELAVALAQNVYLWSEISGPSIME, PTTYEVSSLAYSSDGGFLAIARVNGFVEIWNRKTKNNRCD, HHDGDISCMAWSPINWTLLVGGSTGNIYVYRRTKSMMRRV, VHQEQVCGLEWNYDGTQFASGGNDNLVCIFDIDSLENKKF, IHLA…RIHS, and IHTH…QEIH.

This sequence belongs to the WD repeat CDC20/Fizzy family.

It is found in the nucleus. Its function is as follows. Has a role in meiosis. In Schizosaccharomyces pombe (strain 972 / ATCC 24843) (Fission yeast), this protein is Meiotic fizzy-related protein 2 (mfr2).